The primary structure comprises 617 residues: Electron transfer flavoprotein-ubiquinone oxidoreductase, mitochondrial (617 aa).

A mitochondrion-targeting transit peptide spans 1 to 33; it reads MLVPLAKLSCPAYQCFHALKIKKNYLPLCATRW. An FAD-binding site is contributed by 71–85; it reads VVIVGAGPAGLSAAV. Lys-96 carries the N6-acetyllysine modification. An intramembrane segment occupies 109–130; sequence IGAHTLSGACLDPGAFKELFPD. 2 positions are modified to N6-acetyllysine: Lys-132 and Lys-223. Residues Gly-305 and Gly-306 each coordinate a ubiquinone. The residue at position 357 (Lys-357) is an N6-acetyllysine. An intramembrane segment occupies 428 to 447; that stretch reads MGLHVTEYEDNLKNSWVWKE. Ser-551 is modified (phosphoserine). 4 residues coordinate [4Fe-4S] cluster: Cys-561, Cys-586, Cys-589, and Cys-592. The 30-residue stretch at 577 to 606 folds into the 4Fe-4S ferredoxin-type domain; that stretch reads FRLQINAQNCVHCKTCDIKDPSQNINWVVP.

It belongs to the ETF-QO/FixC family. As to quaternary structure, monomer. It depends on [4Fe-4S] cluster as a cofactor. FAD serves as cofactor.

It localises to the mitochondrion inner membrane. The catalysed reaction is a ubiquinone + reduced [electron-transfer flavoprotein] = a ubiquinol + oxidized [electron-transfer flavoprotein] + H(+). In terms of biological role, accepts electrons from ETF and reduces ubiquinone. The sequence is that of Electron transfer flavoprotein-ubiquinone oxidoreductase, mitochondrial (ETFDH) from Pongo abelii (Sumatran orangutan).